We begin with the raw amino-acid sequence, 755 residues long: LIM domain and actin-binding protein 1 (755 aa).

M1 carries the post-translational modification N-acetylmethionine. S15 is modified (phosphoserine). The segment covering K43–N56 has biased composition (basic and acidic residues). The disordered stretch occupies residues K43 to F151. Residues D88–G97 are compositionally biased toward polar residues. S132 carries the post-translational modification Phosphoserine. The Required for interaction with NPC1L1 signature appears at C164–G166. Composition is skewed to basic and acidic residues over residues S168–M177 and M199–Q208. Residues S168–E226 form a disordered region. Residues S225, S230, and S242 each carry the phosphoserine modification. Residues L241 to K379 form a disordered region. The segment covering E249 to E258 has biased composition (basic and acidic residues). S263 carries the phosphoserine modification. Over residues K292–E305 the composition is skewed to basic and acidic residues. Residues C342–I354 are compositionally biased toward polar residues. A phosphoserine mark is found at S348, S360, S367, and S372. A compositionally biased stretch (polar residues) spans A363–K375. In terms of domain architecture, LIM zinc-binding spans E386–S446. At K437 the chain carries N6-succinyllysine. 2 disordered regions span residues E468–D493 and S505–T714. Residue S488 is modified to Phosphoserine. A required for interaction with MYO5B region spans residues V491–S511. Composition is skewed to basic and acidic residues over residues S512–K526 and W555–A566. A compositionally biased stretch (low complexity) spans S599 to L611. Phosphoserine occurs at positions 600, 603, 608, and 616. Basic and acidic residues-rich tracts occupy residues R638–S653 and E662–E673. Phosphoserine occurs at positions 697, 722, and 737.

In terms of assembly, interacts with NPC1L1; bridges NPC1L1 with MYO5B. Interacts with MYO5B; bridges MYO5B with NPC1L1. Interacts with PXN; this complex stabilizes actin dynamics. Interacts with F-actin and G-actin. Interacts with LUZP1 (via C-terminus); both proteins restrict ciliation and may work together to regulate this process. Binds RAB40B (GTP-bound); interaction influences LIMA1 subcellular localization in lamellipodia during cell migration. Phosphorylation of the C-terminal region by MAPK1/MAPK3 reduces its association with F-actin and contributes to actin filament reorganization and enhanced cell motility. Post-translationally, ubiquitinated by the ECS(RAB40B) complex leading to its degradation. In terms of tissue distribution, expressed throughout the kidney, including renal cortex, medulla, and glomeruli. Expressed in glomeruli, tubular epithelial cells, and extraglomerular vascular endothelial cells (at protein level).

Its subcellular location is the cytoplasm. The protein resides in the cell junction. It is found in the focal adhesion. It localises to the cytoskeleton. The protein localises to the stress fiber. Its subcellular location is the cell membrane. The protein resides in the cell projection. It is found in the ruffle. It localises to the lamellipodium. Actin-binding protein involved in actin cytoskeleton regulation and dynamics. Increases the number and size of actin stress fibers and inhibits membrane ruffling. Inhibits actin filament depolymerization. Bundles actin filaments, delays filament nucleation and reduces formation of branched filaments. Acts as a negative regulator of primary cilium formation. Plays a role in cholesterol homeostasis. Influences plasma cholesterol levels through regulation of intestinal cholesterol absorption. May act as a scaffold protein by regulating NPC1L1 transportation, an essential protein for cholesterol absorption, to the plasma membrane by recruiting MYO5B to NPC1L1, and thus facilitates cholesterol uptake. The protein is LIM domain and actin-binding protein 1 of Rattus norvegicus (Rat).